Reading from the N-terminus, the 199-residue chain is uncharacterized protein (199 aa).

4 helical membrane-spanning segments follow: residues 41-61, 72-92, 109-129, and 145-165; these read LFIPPSACRIDLSVFPWAFIC, SLICSPCFSTVWVSLLICSPW, TVWVNLLICSPWAAKVVSIFV, and VTYSVFTGITGLLSLNCLLNL.

The protein to M.pneumoniae MPN_037.

It is found in the cell membrane. This is an uncharacterized protein from Mycoplasma pneumoniae (strain ATCC 29342 / M129 / Subtype 1) (Mycoplasmoides pneumoniae).